The following is a 467-amino-acid chain: MLLSAPVNSTVRRKPHSPNKKKPKETGTAASFSSSSSTVVLSSNNDGSFDALWDPSISKASDFESSYISAKRLKPESSNRQKKKNSYKYSREENTNEVEEKTSLGSSSKTEADNIFNDQLTSAGNTTYVSNKRDVNFGANSAVVLLGLPTSKSESHRQYHSPSASTTNEDEEDIGVDILVDNHIDSCETVSINNNRGITHQYPETESDVDFDEAVILTPMDGTDKGVKNPRPLEKKYSSSCFEDRTPLNLDDGHFSECNHFSTLDVSSFFHLNEHVHKIDEVELDGPDRTFSLDNVAINTRKKDIDCLYNSSREDLSNLTCSSEGPRNDSYDSDYNIDEVTYRDDESTDEDESLPTPDRKRKKIGHKACEILDSKRIGIKVPKLYVWSLSDKPFSVIDGLCTKSLYPLSDDINTPESLSSCSSSVSSRENQKGDATFDNDAMIADLLNIGGLEVEKASNGHIELIGE.

Residues 1-10 (MLLSAPVNST) show a composition bias toward polar residues. 4 disordered regions span residues 1 to 42 (MLLS…VVLS), 62 to 110 (DFES…SSKT), 151 to 170 (SKSE…TNED), and 341 to 361 (TYRD…DRKR). The segment covering 11-23 (VRRKPHSPNKKKP) has biased composition (basic residues). Low complexity predominate over residues 28–42 (TAASFSSSSSTVVLS). Residues 89 to 102 (YSREENTNEVEEKT) are compositionally biased toward basic and acidic residues.

Interacts with FHL1 to form a repressor complex. The formation of the CRF1-FHL1 complex is inhibited by the TOR pathway. Post-translationally, phosphorylated by CDC28 and YAK1.

It localises to the cytoplasm. Its subcellular location is the nucleus. In terms of biological role, transcription factor, corepressor with FHL1 of ribosomal protein genes. May be involved in the blocking of the spread of silencing. The protein is Transcription factor CRF1 (CRF1) of Saccharomyces cerevisiae (strain ATCC 204508 / S288c) (Baker's yeast).